A 276-amino-acid chain; its full sequence is Large ribosomal subunit protein uL2 (276 aa).

Disordered regions lie at residues 1 to 20 and 219 to 276; these read MGIK…TTND and TVRG…RRKK. The segment covering 7-20 has biased composition (polar residues); sequence NPTTNGRRNMTTND.

Belongs to the universal ribosomal protein uL2 family. In terms of assembly, part of the 50S ribosomal subunit. Forms a bridge to the 30S subunit in the 70S ribosome.

Its function is as follows. One of the primary rRNA binding proteins. Required for association of the 30S and 50S subunits to form the 70S ribosome, for tRNA binding and peptide bond formation. It has been suggested to have peptidyltransferase activity; this is somewhat controversial. Makes several contacts with the 16S rRNA in the 70S ribosome. The protein is Large ribosomal subunit protein uL2 of Bacillus anthracis (strain A0248).